Here is a 606-residue protein sequence, read N- to C-terminus: Polypeptide N-acetylgalactosaminyltransferase 9 (606 aa).

Residues 1–6 (MAVARK) are Cytoplasmic-facing. Residues 7–29 (IRTLLTVNILVFVGIVLFSVYCR) form a helical; Signal-anchor for type II membrane protein membrane-spanning segment. Residues 30–606 (LQGRSQELVR…IRNWIKHARH (577 aa)) are Lumenal-facing. The interval 43 to 62 (GGCRPRPATPAPGSPLRSGG) is disordered. Disulfide bonds link Cys-144/Cys-375 and Cys-366/Cys-445. The catalytic subdomain A stretch occupies residues 153-264 (LPQVSVVFIF…TGWAEPALSR (112 aa)). Positions 194 and 225 each coordinate substrate. Mn(2+) contacts are provided by Asp-248, His-250, and His-380. The segment at 321–383 (PIRTPAMIGC…PCSRVAHIER (63 aa)) is catalytic subdomain B. Substrate is bound by residues Arg-383 and Tyr-388. Asn-463 carries N-linked (GlcNAc...) asparagine glycosylation. The region spanning 467-603 (TYGEVRNSKA…KWMIRNWIKH (137 aa)) is the Ricin B-type lectin domain. 3 cysteine pairs are disulfide-bonded: Cys-480-Cys-496, Cys-528-Cys-543, and Cys-570-Cys-590.

It belongs to the glycosyltransferase 2 family. GalNAc-T subfamily. Requires Mn(2+) as cofactor.

Its subcellular location is the golgi apparatus membrane. It carries out the reaction L-seryl-[protein] + UDP-N-acetyl-alpha-D-galactosamine = a 3-O-[N-acetyl-alpha-D-galactosaminyl]-L-seryl-[protein] + UDP + H(+). It catalyses the reaction L-threonyl-[protein] + UDP-N-acetyl-alpha-D-galactosamine = a 3-O-[N-acetyl-alpha-D-galactosaminyl]-L-threonyl-[protein] + UDP + H(+). The protein operates within protein modification; protein glycosylation. Catalyzes the initial reaction in O-linked oligosaccharide biosynthesis, the transfer of an N-acetyl-D-galactosamine residue to a serine or threonine residue on the protein receptor. Does not glycosylate apomucin or SDC3. This is Polypeptide N-acetylgalactosaminyltransferase 9 (GALNT9) from Macaca fascicularis (Crab-eating macaque).